A 276-amino-acid chain; its full sequence is C-type lectin domain family 12 member B (276 aa).

Residues 1 to 43 (MSEEVTYATLTFQDSAGARNNRDGNNLRKRGHPAPSPIWRHAA) are Cytoplasmic-facing. The ITIM motif motif lies at 5 to 10 (VTYATL). A Phosphotyrosine modification is found at Tyr-7. Residues 44-64 (LGLVTLCLMLLIGLVTLGMMF) form a helical; Signal-anchor for type II membrane protein membrane-spanning segment. Over 65–276 (LQISNDINSD…AAPVKTEDLD (212 aa)) the chain is Extracellular. Asn-91, Asn-176, and Asn-237 each carry an N-linked (GlcNAc...) asparagine glycan. Positions 150–264 (YQNSCYYFTT…CSAEIFWICE (115 aa)) constitute a C-type lectin domain. 2 disulfide bridges follow: Cys-172–Cys-263 and Cys-242–Cys-255.

Homodimer. Interacts (via ITIM motif) with PTPN6. Interacts (via ITIM motif) with PTPN11; this interaction triggers dephosphorylation and activation of PTPN11. Post-translationally, N-glycosylated. In terms of tissue distribution, detected in colon, heart, kidney, liver, lung, mammary gland, ovary, spleen and testis. Expressed in melanocytes (at protein level).

The protein localises to the cell membrane. In terms of biological role, inhibitory receptor postulated to negatively regulate immune and non-immune functions. Upon phosphorylation, recruits SH2 domain-containing PTPN6 and PTPN11 phosphatases to its ITIM motif and antagonizes activation signals. Although it inhibits KLRK1/NKG2D-mediated signaling, it does not bind known ligands of KLRK1/NKG2D and therefore is not its inhibitory counterpart. May limit activation of myeloid cell subsets in response to infection or tissue inflammation. May protect target cells against natural killer cell-mediated lysis. May negatively regulate cell cycle and differentiation of melanocytes via inactivation of STAT3. The sequence is that of C-type lectin domain family 12 member B from Homo sapiens (Human).